The chain runs to 351 residues: MRFSDFDLRLAAFGAQPVHRGRIARVWLNGQALDTGTRRRHSEHFLPLALREALPALTAELDGLARVHSEHAGSDGSRLLVALADGQMVESVLLPRDGLCVSTQVGCAVGCRFCMTGKSGLIRQVTSMEILAQVVLARRRRAVKKVVFMGMGEPAHNLENVLEAINLLGTEGNIGHKNLVFSTVGDRRVFEALPQQRVKPALALSLHTTKAELRARLLPRAPSIAPDELVELGERYARHIGYPIQYQWTLLKGVNDGNDELDAVLRLLKGKYGVLNVIPFNSLEGDDYQRPDLERIREIVRYVHSRGVLVKVRNSAGQDVDGGCGQLRARATGADQVVTLRRAPRPQAVQA.

The active-site Proton acceptor is Glu90. A Radical SAM core domain is found at 93–319; it reads LLPRDGLCVS…VKVRNSAGQD (227 aa). A disulfide bridge connects residues Cys100 and Cys324. Cys107, Cys111, and Cys114 together coordinate [4Fe-4S] cluster. Residues 152–153, Ser182, 205–207, and Asn281 contribute to the S-adenosyl-L-methionine site; these read GE and SLH. Cys324 acts as the S-methylcysteine intermediate in catalysis.

Belongs to the radical SAM superfamily. RlmN family. [4Fe-4S] cluster serves as cofactor.

The protein localises to the cytoplasm. The protein is Probable RNA methyltransferase BAV1540 of Bordetella avium (strain 197N).